The sequence spans 626 residues: DNA mismatch repair protein MutL (626 aa).

Residues 377–413 (EEPQAVKQPTQLWQPSTKPIIEEPIQEEKSWDSNEEG) form a disordered region. Residues 383–393 (KQPTQLWQPST) are compositionally biased toward polar residues.

This sequence belongs to the DNA mismatch repair MutL/HexB family.

Functionally, this protein is involved in the repair of mismatches in DNA. It is required for dam-dependent methyl-directed DNA mismatch repair. May act as a 'molecular matchmaker', a protein that promotes the formation of a stable complex between two or more DNA-binding proteins in an ATP-dependent manner without itself being part of a final effector complex. The protein is DNA mismatch repair protein MutL of Bacillus anthracis (strain A0248).